The primary structure comprises 461 residues: NADH-ubiquinone oxidoreductase chain 4 (461 aa).

The next 13 membrane-spanning stretches (helical) occupy residues 20-42, 61-81, 93-113, 114-134, 147-167, 197-217, 225-245, 258-278, 285-304, 309-331, 351-371, 393-413, and 436-456; these read PAWLWPTMTTNSLLVATISLTWL, PLSTPLLILTCWLLPLMILAS, QRSFISLLISLQTFLIMAFGA, TEIILFYIMFEATLIPTLIII, GTYFLFYTVMGSLPLLVALLM, WTACLLAFLVKMPLYGVHLWL, PIAGSMVLAAVLLKLGGYGMM, LAYPFIILALWGIIMTGSICL, SLIAYSSVGHMGLVAAGILT, GFTGATVLMIAHGLTSSALFCLA, VILPLMTFWWLMMNLANLALP, TLTMTGLGMLITAIYSLHMFL, and LLMTMHALPMLLLILKPELIW.

Belongs to the complex I subunit 4 family.

It localises to the mitochondrion membrane. It carries out the reaction a ubiquinone + NADH + 5 H(+)(in) = a ubiquinol + NAD(+) + 4 H(+)(out). Its function is as follows. Core subunit of the mitochondrial membrane respiratory chain NADH dehydrogenase (Complex I) that is believed to belong to the minimal assembly required for catalysis. Complex I functions in the transfer of electrons from NADH to the respiratory chain. The immediate electron acceptor for the enzyme is believed to be ubiquinone. The protein is NADH-ubiquinone oxidoreductase chain 4 (MT-ND4) of Latimeria chalumnae (Coelacanth).